Here is a 366-residue protein sequence, read N- to C-terminus: tRNA/tmRNA (uracil-C(5))-methyltransferase (366 aa).

5 residues coordinate S-adenosyl-L-methionine: Q190, Y218, N223, E239, and D299. The active-site Nucleophile is C324. The Proton acceptor role is filled by E358.

It belongs to the class I-like SAM-binding methyltransferase superfamily. RNA M5U methyltransferase family. TrmA subfamily.

The catalysed reaction is uridine(54) in tRNA + S-adenosyl-L-methionine = 5-methyluridine(54) in tRNA + S-adenosyl-L-homocysteine + H(+). It catalyses the reaction uridine(341) in tmRNA + S-adenosyl-L-methionine = 5-methyluridine(341) in tmRNA + S-adenosyl-L-homocysteine + H(+). Dual-specificity methyltransferase that catalyzes the formation of 5-methyluridine at position 54 (m5U54) in all tRNAs, and that of position 341 (m5U341) in tmRNA (transfer-mRNA). The polypeptide is tRNA/tmRNA (uracil-C(5))-methyltransferase (Escherichia coli O157:H7 (strain EC4115 / EHEC)).